The following is a 216-amino-acid chain: Protein Syd (216 aa).

The protein belongs to the Syd family.

The protein resides in the cell inner membrane. In terms of biological role, interacts with the SecY protein in vivo. May bind preferentially to an uncomplexed state of SecY, thus functioning either as a chelating agent for excess SecY in the cell or as a regulatory factor that negatively controls the translocase function. This Shewanella putrefaciens (strain CN-32 / ATCC BAA-453) protein is Protein Syd.